Here is a 224-residue protein sequence, read N- to C-terminus: Transcription factor MYB1 (224 aa).

HTH myb-type domains lie at 10-66 (LGRV…KPSI) and 67-117 (KRGH…YKKH). 2 consecutive DNA-binding regions (H-T-H motif) follow at residues 38–62 (WKRVPERAGLNRCRKSCRWRWLNYL) and 90–113 (WSLIAAKLPGRTINDVKNYCNTHL).

Its subcellular location is the nucleus. Its function is as follows. Activates DODA1 and CYP76AD1 in the betalain red pigment pathway. The chain is Transcription factor MYB1 from Beta vulgaris (Sugar beet).